The primary structure comprises 335 residues: Protein-arginine kinase (335 aa).

The region spanning 20-243 is the Phosphagen kinase C-terminal domain; that stretch reads IVMSSRIRLA…QQIINEEMQI (224 aa). ATP contacts are provided by residues 23–27, His-81, Arg-114, 165–169, and 196–201; these read SSRIR, RASVM, and RGIYGE.

The protein belongs to the ATP:guanido phosphotransferase family.

The catalysed reaction is L-arginyl-[protein] + ATP = N(omega)-phospho-L-arginyl-[protein] + ADP + H(+). Catalyzes the specific phosphorylation of arginine residues in proteins. This Staphylococcus haemolyticus (strain JCSC1435) protein is Protein-arginine kinase.